A 237-amino-acid polypeptide reads, in one-letter code: Uridylate kinase (237 aa).

13–16 (KLSG) contributes to the ATP binding site. Glycine 53 contributes to the UMP binding site. 2 residues coordinate ATP: glycine 54 and arginine 58. UMP contacts are provided by residues aspartate 73 and 134–141 (AGLPYFST). Residues asparagine 162, tyrosine 168, and aspartate 171 each contribute to the ATP site.

It belongs to the UMP kinase family. In terms of assembly, homohexamer.

The protein resides in the cytoplasm. The enzyme catalyses UMP + ATP = UDP + ADP. The protein operates within pyrimidine metabolism; CTP biosynthesis via de novo pathway; UDP from UMP (UMPK route): step 1/1. Inhibited by UTP. In terms of biological role, catalyzes the reversible phosphorylation of UMP to UDP. The chain is Uridylate kinase from Leifsonia xyli subsp. xyli (strain CTCB07).